The primary structure comprises 286 residues: Polyamine aminopropyltransferase (286 aa).

The 238-residue stretch at 3–240 folds into the PABS domain; sequence DLWYSESHAD…GHWLFGFASK (238 aa). Gln32 contributes to the S-methyl-5'-thioadenosine binding site. Spermidine contacts are provided by His63 and Asp87. Residues Glu107 and 139–140 contribute to the S-methyl-5'-thioadenosine site; that span reads DG. The Proton acceptor role is filled by Asp158. Spermidine is bound at residue 158–161; sequence DSTD. Pro165 contacts S-methyl-5'-thioadenosine.

It belongs to the spermidine/spermine synthase family. As to quaternary structure, homodimer or homotetramer.

It is found in the cytoplasm. It carries out the reaction S-adenosyl 3-(methylsulfanyl)propylamine + putrescine = S-methyl-5'-thioadenosine + spermidine + H(+). It participates in amine and polyamine biosynthesis; spermidine biosynthesis; spermidine from putrescine: step 1/1. Functionally, catalyzes the irreversible transfer of a propylamine group from the amino donor S-adenosylmethioninamine (decarboxy-AdoMet) to putrescine (1,4-diaminobutane) to yield spermidine. This Clostridium acetobutylicum (strain ATCC 824 / DSM 792 / JCM 1419 / IAM 19013 / LMG 5710 / NBRC 13948 / NRRL B-527 / VKM B-1787 / 2291 / W) protein is Polyamine aminopropyltransferase.